The sequence spans 373 residues: Chemerin-like receptor 1 (373 aa).

Residues 1 to 41 (MRMEDEDYNTSISYGDEYPDYLDSIVVLEDLSPLEARVTRI) are Extracellular-facing. N-linked (GlcNAc...) asparagine glycosylation occurs at Asn9. Residues 42–64 (FLVVVYSIVCFLGILGNGLVIII) form a helical membrane-spanning segment. The Cytoplasmic segment spans residues 65–75 (ATFKMKKTVNM). The chain crosses the membrane as a helical span at residues 76–97 (VWFLNLAVADFLFNVFLPIHIT). The Extracellular segment spans residues 98-114 (YAAMDYHWVFGTAMCKI). Cys112 and Cys189 are disulfide-bonded. Residues 115 to 135 (SNFLLIHNMFTSVFLLTIISS) traverse the membrane as a helical segment. The Cytoplasmic portion of the chain corresponds to 136 to 154 (DRCISVLLPVWSQNHRSVR). Residues 155–176 (LAYMACMVIWVLAFFLSSPSLV) traverse the membrane as a helical segment. Topologically, residues 177 to 224 (FRDTANLHGKISCFNNFSLSTPGSSSWPTHSQMDPVGYSRHMVVTVTR) are extracellular. An N-linked (GlcNAc...) asparagine glycan is attached at Asn192. Residues 225–245 (FLCGFLVPVLIITACYLTIVC) traverse the membrane as a helical segment. Over 246-261 (KLQRNRLAKTKKPFKI) the chain is Cytoplasmic. The chain crosses the membrane as a helical span at residues 262–282 (IVTIIITFFLCWCPYHTLNLL). Residues 283 to 300 (ELHHTAMPGSVFSLGLPL) are Extracellular-facing. The chain crosses the membrane as a helical span at residues 301 to 320 (ATALAIANSCMNPILYVFMG). Topologically, residues 321-373 (QDFKKFKVALFSRLVNALSEDTGHSSYPSHRSFTKMSSMNERTSMNERETGML) are cytoplasmic. A Phosphoserine modification is found at Ser339. Residues 341–373 (DTGHSSYPSHRSFTKMSSMNERTSMNERETGML) form a disordered region. Thr342 carries the post-translational modification Phosphothreonine. Over residues 344-363 (HSSYPSHRSFTKMSSMNERT) the composition is skewed to polar residues. 3 positions are modified to phosphoserine: Ser349, Ser352, and Ser358. Over residues 364–373 (SMNERETGML) the composition is skewed to basic and acidic residues.

The protein belongs to the chemokine-like receptor (CMKLR) family. As to expression, prominently expressed in developing osseous and cartilaginous tissue. Also found in adult parathyroid glands. Expressed in cardiovascular system, brain, kidney, gastrointestinal tissues and myeloid tissues. Expressed in a broad array of tissues associated with hematopoietic and immune function including, spleen, thymus, appendix, lymph node, bone marrow and fetal liver. Among leukocyte populations abundant expression in monocyte-derived macrophage and immature dendritic cells (DCs). High expression in blood monocytes and low levels in polymorphonuclear cells and T-cells. Expressed on endothelial cells. Highly expressed in differentiating adipocytes.

It localises to the cell membrane. Its function is as follows. Receptor for the chemoattractant adipokine chemerin/RARRES2 and for the omega-3 fatty acid derived molecule resolvin E1. Interaction with RARRES2 initiates activation of G proteins G(i)/G(o) and beta-arrestin pathways inducing cellular responses via second messenger pathways such as intracellular calcium mobilization, phosphorylation of MAP kinases MAPK1/MAPK3 (ERK1/2), TYRO3, MAPK14/P38MAPK and PI3K leading to multifunctional effects, like reduction of immune responses, enhancing of adipogenesis and angionesis. Resolvin E1 down-regulates cytokine production in macrophages by reducing the activation of MAPK1/3 (ERK1/2) and NF-kappa-B. Positively regulates adipogenesis and adipocyte metabolism. Functionally, (Microbial infection) Acts as a coreceptor for several SIV strains (SIVMAC316, SIVMAC239, SIVMACL7E-FR and SIVSM62A), as well as a primary HIV-1 strain (92UG024-2). This is Chemerin-like receptor 1 from Homo sapiens (Human).